The chain runs to 216 residues: Gas vesicle protein H (216 aa).

The tract at residues 1–141 (MSPNLNGPGG…IHIETRETDD (141 aa)) is disordered. Residues 15–25 (DRPDEPDDSDR) are compositionally biased toward acidic residues. 3 stretches are compositionally biased toward basic and acidic residues: residues 38 to 51 (PDDR…RPSD), 73 to 84 (DGHRQGHGRIDR), and 107 to 141 (KPSD…ETDD).

It belongs to the gas vesicle GvpH family. As to quaternary structure, gvpF to GvpM interact with each other in vitro, and may form multi-subunit complex(es). Interacts with GvpC. Might interact with GvpA.

It is found in the gas vesicle. Proteins GvpF to GvpM might be involved in nucleating gas vesicle formation. A minor component of the gas vesicle. Gas vesicles are hollow, gas filled proteinaceous nanostructures found in some microorganisms. They allow positioning of halobacteria at the optimal depth for growth in the poorly aerated, shallow brine pools of their habitat. Functionally, expression of a 9.5 kb mc-vac DNA fragment containing 2 divergently transcribed regions (gvpD-gvpE-gvpF-gvpG-gvpH-gvpI-gvpJ-gvpK-gvpL-gvpM and gvpA-gvpC-gvpN-gvpO) allows H.volcanii to produce gas vesicles. The sequence is that of Gas vesicle protein H from Haloferax mediterranei (strain ATCC 33500 / DSM 1411 / JCM 8866 / NBRC 14739 / NCIMB 2177 / R-4) (Halobacterium mediterranei).